The following is a 160-amino-acid chain: Peptide deformylase 1 (160 aa).

Positions 90 and 132 each coordinate Fe cation. Residue Glu133 is part of the active site. Fe cation is bound at residue His136.

It belongs to the polypeptide deformylase family. The cofactor is Fe(2+).

The catalysed reaction is N-terminal N-formyl-L-methionyl-[peptide] + H2O = N-terminal L-methionyl-[peptide] + formate. In terms of biological role, removes the formyl group from the N-terminal Met of newly synthesized proteins. Requires at least a dipeptide for an efficient rate of reaction. N-terminal L-methionine is a prerequisite for activity but the enzyme has broad specificity at other positions. This is Peptide deformylase 1 (defA) from Bacillus subtilis (strain 168).